The following is a 231-amino-acid chain: Transcriptional regulatory protein KdpE (231 aa).

Positions 4–117 (KILIIEDDHA…ELRARIRVIE (114 aa)) constitute a Response regulatory domain. Asp-53 is subject to 4-aspartylphosphate. A DNA-binding region (ompR/PhoB-type) is located at residues 127–227 (NIVFTNGLLS…HPRIGYQMLQ (101 aa)).

In terms of processing, phosphorylated by KdpD. Phosphorylation is required for transcriptional activity.

In terms of biological role, member of the two-component regulatory system KdpD/KdpE that regulates the transcription of a series of virulence factors through sensing external K(+) concentrations. Also regulates capsular polysaccharide synthesis. Upon phosphorylation by KpdD, functions as a transcriptional regulator by direct binding to promoter regions of target genes including spa, hla, aur and geh. Represses the transcription of kdpFABC operon. The protein is Transcriptional regulatory protein KdpE of Staphylococcus aureus (strain NCTC 8325 / PS 47).